The sequence spans 124 residues: Putative outer membrane protein TC_0858 (124 aa).

The signal sequence occupies residues 1–31 (MGKTKKRKQSITLIEMMVVITLIGIISGALA).

It is found in the cell outer membrane. In Chlamydia muridarum (strain MoPn / Nigg), this protein is Putative outer membrane protein TC_0858.